Reading from the N-terminus, the 192-residue chain is uncharacterized protein (192 aa).

Residues 29 to 160 enclose the Nudix hydrolase domain; it reads QRQAAVLIPV…PLDVYRRGNS (132 aa). The Nudix box motif lies at 67 to 89; that stretch reads GAVDSTDASLIAAALREAQEEVA. 2 residues coordinate Mg(2+): Glu-83 and Glu-87.

It belongs to the Nudix hydrolase family. PCD1 subfamily. Mn(2+) is required as a cofactor. Mg(2+) serves as cofactor.

Its function is as follows. Probably mediates the hydrolysis of some nucleoside diphosphate derivatives. This is an uncharacterized protein from Salmonella agona (strain SL483).